We begin with the raw amino-acid sequence, 405 residues long: L-carnitine CoA-transferase (405 aa).

2 residues coordinate CoA: Lys97 and Arg104. Asp169 acts as the Nucleophile in catalysis.

The protein belongs to the CoA-transferase III family. CaiB subfamily. As to quaternary structure, homodimer.

It is found in the cytoplasm. It carries out the reaction crotonobetainyl-CoA + (R)-carnitine = crotonobetaine + (R)-carnitinyl-CoA. It catalyses the reaction 4-(trimethylamino)butanoyl-CoA + (R)-carnitine = (R)-carnitinyl-CoA + 4-(trimethylamino)butanoate. The protein operates within amine and polyamine metabolism; carnitine metabolism. Functionally, catalyzes the reversible transfer of the CoA moiety from gamma-butyrobetainyl-CoA to L-carnitine to generate L-carnitinyl-CoA and gamma-butyrobetaine. Is also able to catalyze the reversible transfer of the CoA moiety from gamma-butyrobetainyl-CoA or L-carnitinyl-CoA to crotonobetaine to generate crotonobetainyl-CoA. This is L-carnitine CoA-transferase from Escherichia coli (strain SE11).